The primary structure comprises 302 residues: Putative T-box protein 34 (302 aa).

The T-box DNA-binding region spans 5-180 (IVNEHKYREL…KMNLAPGSSQ (176 aa)).

The protein localises to the nucleus. The protein is Putative T-box protein 34 (tbx-34) of Caenorhabditis elegans.